Reading from the N-terminus, the 373-residue chain is 3 beta-hydroxysteroid dehydrogenase/Delta 5--&gt;4-isomerase type 2 (373 aa).

Residue Tyr-155 is the Proton acceptor of the active site. Lys-159 contacts NAD(+). The helical transmembrane segment at 288–308 (LPLLYWLAFLLETVSFLLRPF) threads the bilayer.

This sequence belongs to the 3-beta-HSD family. In terms of tissue distribution, adrenal glands, testes and ovaries.

Its subcellular location is the endoplasmic reticulum membrane. It localises to the mitochondrion membrane. The catalysed reaction is a 3beta-hydroxy-Delta(5)-steroid + NAD(+) = a 3-oxo-Delta(5)-steroid + NADH + H(+). The enzyme catalyses a 3-oxo-Delta(5)-steroid = a 3-oxo-Delta(4)-steroid. It functions in the pathway lipid metabolism; steroid biosynthesis. 3-beta-HSD is a bifunctional enzyme, that catalyzes the oxidative conversion of Delta(5)-ene-3-beta-hydroxy steroid, and the oxidative conversion of ketosteroids. The 3-beta-HSD enzymatic system plays a crucial role in the biosynthesis of all classes of hormonal steroids. The polypeptide is 3 beta-hydroxysteroid dehydrogenase/Delta 5--&gt;4-isomerase type 2 (Hsd3b) (Rattus norvegicus (Rat)).